The primary structure comprises 316 residues: Arabinooligosaccharides transport system permease protein AraP (316 aa).

The next 7 membrane-spanning stretches (helical) occupy residues 32–52 (VVPYVLISPFILSFIVLSFYP), 94–114 (TYMILTVVILVSIPMLFAVLL), 128–148 (ALFLPALTSVIVAGMVFRLMF), 178–198 (MFLMVVLASWRWMGINILYFL), 224–244 (FYVTLPFLKPVTIFVTTISVI), 254–274 (FVFWEAGSPGNIGLTIVGYLY), and 283–303 (MGFGAAIGVVLMLIIFVISIT). The 216-residue stretch at 89 to 304 (LQNTTTYMIL…LIIFVISITQ (216 aa)) folds into the ABC transmembrane type-1 domain.

The protein belongs to the binding-protein-dependent transport system permease family. MalFG subfamily. In terms of assembly, the complex is composed of two ATP-binding proteins (MsmX), two transmembrane proteins (AraP and AraQ) and a solute-binding protein (AraN).

It localises to the cell membrane. Part of the ABC transporter complex AraNPQ involved in the uptake of arabinooligosaccharides. Responsible for the translocation of the substrate across the membrane. This chain is Arabinooligosaccharides transport system permease protein AraP (araP), found in Halalkalibacterium halodurans (strain ATCC BAA-125 / DSM 18197 / FERM 7344 / JCM 9153 / C-125) (Bacillus halodurans).